The following is a 179-amino-acid chain: Inosine/xanthosine triphosphatase (179 aa).

A substrate-binding site is contributed by 8–13; the sequence is TTNPAK. Residues aspartate 38 and glutamate 68 each coordinate Mg(2+). 68-69 is a substrate binding site; sequence EA.

It belongs to the YjjX NTPase family. In terms of assembly, homodimer. Mg(2+) serves as cofactor. It depends on Mn(2+) as a cofactor.

It carries out the reaction XTP + H2O = XDP + phosphate + H(+). It catalyses the reaction ITP + H2O = IDP + phosphate + H(+). Its function is as follows. Phosphatase that hydrolyzes non-canonical purine nucleotides such as XTP and ITP to their respective diphosphate derivatives. Probably excludes non-canonical purines from DNA/RNA precursor pool, thus preventing their incorporation into DNA/RNA and avoiding chromosomal lesions. The sequence is that of Inosine/xanthosine triphosphatase from Pectobacterium carotovorum subsp. carotovorum (strain PC1).